Here is a 95-residue protein sequence, read N- to C-terminus: Small ribosomal subunit protein bS6 (95 aa).

Belongs to the bacterial ribosomal protein bS6 family.

Binds together with bS18 to 16S ribosomal RNA. The polypeptide is Small ribosomal subunit protein bS6 (Clostridium acetobutylicum (strain ATCC 824 / DSM 792 / JCM 1419 / IAM 19013 / LMG 5710 / NBRC 13948 / NRRL B-527 / VKM B-1787 / 2291 / W)).